The sequence spans 252 residues: Triosephosphate isomerase (252 aa).

10–12 (NWK) is a binding site for substrate. His96 acts as the Electrophile in catalysis. Residue Glu168 is the Proton acceptor of the active site. Substrate-binding positions include Gly174, Ser214, and 235-236 (GG).

This sequence belongs to the triosephosphate isomerase family. As to quaternary structure, homodimer.

The protein localises to the cytoplasm. The enzyme catalyses D-glyceraldehyde 3-phosphate = dihydroxyacetone phosphate. Its pathway is carbohydrate biosynthesis; gluconeogenesis. It functions in the pathway carbohydrate degradation; glycolysis; D-glyceraldehyde 3-phosphate from glycerone phosphate: step 1/1. In terms of biological role, involved in the gluconeogenesis. Catalyzes stereospecifically the conversion of dihydroxyacetone phosphate (DHAP) to D-glyceraldehyde-3-phosphate (G3P). The chain is Triosephosphate isomerase from Lactococcus lactis subsp. cremoris (strain MG1363).